The sequence spans 228 residues: uncharacterized protein (228 aa).

This is an uncharacterized protein from Methanocaldococcus jannaschii (strain ATCC 43067 / DSM 2661 / JAL-1 / JCM 10045 / NBRC 100440) (Methanococcus jannaschii).